We begin with the raw amino-acid sequence, 91 residues long: Potassium channel toxin TstKMK (91 aa).

Positions M1 to A25 are cleaved as a signal peptide. A propeptide spanning residues G26–A42 is cleaved from the precursor. Residues E58 to L91 enclose the BetaSPN-type CS-alpha/beta domain. 3 disulfides stabilise this stretch: C61/C81, C68/C86, and C72/C88.

The protein belongs to the long chain scorpion toxin family. Class 2 subfamily. As to expression, expressed by the venom gland.

Its subcellular location is the secreted. Its function is as follows. The full peptide presents antibacterial and cytotoxic activities. The synthetic C-terminus (AA 33-76) inhibits voltage-gated potassium channels Kv1.1/KCNA1, Kv1.2/KCNA2, and Kv1.3/KCNA3. The protein is Potassium channel toxin TstKMK of Tityus stigmurus (Brazilian scorpion).